Here is a 742-residue protein sequence, read N- to C-terminus: Collectin-12 (742 aa).

The Cytoplasmic segment spans residues methionine 1–lysine 37. Residues leucine 38 to glycine 58 form a helical; Signal-anchor for type II membrane protein membrane-spanning segment. Topologically, residues tyrosine 59–leucine 742 are extracellular. The N-linked (GlcNAc...) asparagine glycan is linked to asparagine 67. The stretch at glutamate 73–alanine 141 forms a coiled coil. N-linked (GlcNAc...) asparagine glycosylation is found at asparagine 159 and asparagine 168. Residues glutamine 215–aspartate 254 adopt a coiled-coil conformation. Asparagine 271 carries an N-linked (GlcNAc...) asparagine glycan. Residues glutamine 296–lysine 328 adopt a coiled-coil conformation. Residues threonine 439–proline 591 are disordered. Collagen-like domains are found at residues glycine 443–lysine 502 and glycine 527–serine 586. Over residues serine 501–proline 514 the composition is skewed to low complexity. Pro residues predominate over residues lysine 516 to proline 532. Positions lysine 534–proline 556 are enriched in low complexity. Cystine bridges form between cysteine 607/cysteine 618, cysteine 635/cysteine 730, and cysteine 708/cysteine 722. The 118-residue stretch at phenylalanine 614–glutamate 731 folds into the C-type lectin domain. The Ca(2+) site is built by phenylalanine 644, asparagine 646, glutamate 650, aspartate 670, and glutamate 674. A carbohydrate contacts are provided by lysine 691, glutamine 694, and aspartate 696. Glutamine 694, aspartate 696, asparagine 697, glutamate 706, aspartate 707, asparagine 718, aspartate 719, and glutamate 731 together coordinate Ca(2+). Glutamate 706 serves as a coordination point for a carbohydrate. The a carbohydrate site is built by asparagine 718 and aspartate 719.

As to quaternary structure, the extracellular domain forms a stable trimer. The extracellular domain interacts with fibrillar amyloid-beta peptide.

The protein localises to the membrane. Its function is as follows. Scavenger receptor that displays several functions associated with host defense. Promotes binding and phagocytosis of Gram-positive, Gram-negative bacteria and yeast. Mediates the recognition, internalization and degradation of oxidatively modified low density lipoprotein (oxLDL) by vascular endothelial cells. Binds to several carbohydrates including Gal-type ligands, D-galactose, L- and D-fucose, GalNAc, T and Tn antigens in a calcium-dependent manner and internalizes specifically GalNAc in nurse-like cells. Also binds to sialyl Lewis X or a trisaccharide and asialo-orosomucoid (ASOR). In Bos taurus (Bovine), this protein is Collectin-12 (COLEC12).